Consider the following 751-residue polypeptide: Methionine--tRNA ligase, cytoplasmic (751 aa).

N-acetylserine is present on S2. The segment at 36–92 is interaction with ARC1; sequence LKPEVDNDNAAMELRNTKEPFLLFDANAILRYVMDDFEGQTSDKYQFALASLQNLLY. The 'HIGH' region signature appears at 205-215; it reads PYVNNVPHLGN. K411 contributes to the ATP binding site. The 'KMSKS' region signature appears at 525 to 529; that stretch reads KFSKS.

It belongs to the class-I aminoacyl-tRNA synthetase family. Component of a yeast aminoacyl-tRNA synthase (aaRS) complex formed by methionyl-tRNA synthase MES1, glutamyl-tRNA synthase GUS1 and the tRNA aminoacylation cofactor ARC1 in a stoichiometric complex. Interacts (via N-ter) with ARC1 (via N-ter). Can also form a stable binary complex with ARC1 that is functional in terms of aminoacylation. ARC1 increases the affinity for cognate tRNAs due to the presence of a tRNA binding domain in the middle and C-terminal part of ARC1.

The protein resides in the cytoplasm. It carries out the reaction tRNA(Met) + L-methionine + ATP = L-methionyl-tRNA(Met) + AMP + diphosphate. Catalyzes the attachment of methionine to tRNA(Met) in a two-step reaction: methionine is first activated by ATP to form Met-AMP and then transferred to the acceptor end of tRNA(Met). The chain is Methionine--tRNA ligase, cytoplasmic (MES1) from Saccharomyces cerevisiae (strain ATCC 204508 / S288c) (Baker's yeast).